The chain runs to 664 residues: DNA ligase (664 aa).

NAD(+)-binding positions include 32 to 36 (DKEYD) and 80 to 81 (SL). Residue Lys-122 is the N6-AMP-lysine intermediate of the active site. NAD(+)-binding residues include Arg-144, Glu-178, and Lys-314. Residues Cys-407, Cys-410, Cys-423, and Cys-429 each contribute to the Zn(2+) site. In terms of domain architecture, BRCT spans 587-664 (IDENPFMGKT…NEEEFSNKIK (78 aa)).

This sequence belongs to the NAD-dependent DNA ligase family. LigA subfamily. Requires Mg(2+) as cofactor. It depends on Mn(2+) as a cofactor.

The enzyme catalyses NAD(+) + (deoxyribonucleotide)n-3'-hydroxyl + 5'-phospho-(deoxyribonucleotide)m = (deoxyribonucleotide)n+m + AMP + beta-nicotinamide D-nucleotide.. DNA ligase that catalyzes the formation of phosphodiester linkages between 5'-phosphoryl and 3'-hydroxyl groups in double-stranded DNA using NAD as a coenzyme and as the energy source for the reaction. It is essential for DNA replication and repair of damaged DNA. The polypeptide is DNA ligase (Clostridium botulinum (strain Kyoto / Type A2)).